The primary structure comprises 1560 residues: BRD4-interacting chromatin-remodeling complex-associated protein (1560 aa).

6 disordered regions span residues 53 to 99 (VQEA…GADQ), 624 to 688 (APQA…ATPT), 723 to 949 (IVSA…VTTP), 974 to 1028 (NKAG…TGLP), 1049 to 1075 (KAAS…KPPT), and 1215 to 1300 (SSEG…IKTY). The segment covering 86–96 (ATGGGGGGSGG) has biased composition (gly residues). A compositionally biased stretch (low complexity) spans 624–664 (APQAPPAVSTPLPLGLQQPQAQQPPQAPTPQAAAPPQATTP). Residues 726 to 736 (APPPAQDPAPA) are compositionally biased toward pro residues. A compositionally biased stretch (low complexity) spans 747–780 (PQAPDSQASPAPAPQIPAAAPLKGPGPSSSPSLP). Pro residues-rich tracts occupy residues 791-806 (LPSP…PPSR), 814-831 (PSEP…PPTL), and 843-880 (VPPP…PHLP). Over residues 881 to 896 (PSSTSSAVASSSETSS) the composition is skewed to low complexity. A Phosphoserine modification is found at Ser919. A Phosphothreonine modification is found at Thr921. Residues 932-941 (PAAPPPPPPR) show a composition bias toward pro residues. Positions 1005-1028 (APSGTPTAPSHAPAPAPMAATGLP) are enriched in low complexity. Position 1057 is an N6-acetyllysine (Lys1057). Over residues 1227–1236 (LSSSAPGAST) the composition is skewed to polar residues. A compositionally biased stretch (low complexity) spans 1264–1281 (ASSSLSSSSSSSSAASSL). A Glycyl lysine isopeptide (Lys-Gly) (interchain with G-Cter in SUMO2) cross-link involves residue Lys1313. Disordered stretches follow at residues 1324 to 1424 (NTAL…VDEA) and 1440 to 1560 (YQRM…TLTR). The segment covering 1331 to 1356 (HQPPPPPATLKVAEPPPRPPPPPPPT) has biased composition (pro residues). A compositionally biased stretch (low complexity) spans 1401-1412 (PEGTPAGRARGG). Ser1413 is subject to Phosphoserine. Positions 1485–1515 (ASFSSDSPQDDTLTEHLQSAIDSILNLQQAP) are enriched in polar residues.

As to quaternary structure, component of the multiprotein chromatin-remodeling complexes SWI/SNF: SWI/SNF-A (BAF), SWI/SNF-B (PBAF) and related complexes. The canonical complex contains a catalytic subunit (either SMARCA4/BRG1/BAF190A or SMARCA2/BRM/BAF190B) and at least SMARCE1, ACTL6A/BAF53, SMARCC1/BAF155, SMARCC2/BAF170, and SMARCB1/SNF5/BAF47. Other subunits specific to each of the complexes may also be present permitting several possible combinations developmentally and tissue specific. Component of the SWI/SNF (GBAF) subcomplex, which includes at least BICRA or BICRAL (mutually exclusive), BRD9, SS18, the core BAF subunits, SMARCA2/BRM, SMARCA4/BRG1/BAF190A, ACTL6A/BAF53, SMARCC1/BAF155, and SMARCD1/BAF60A. Interacts with BRD4; the interaction bridges BRD4 to the GBAF complex. In terms of tissue distribution, expressed at moderate levels in heart, brain, placenta, skeletal muscle, and pancreas, and at lower levels in lung, liver and kidney.

It is found in the nucleus. Component of SWI/SNF chromatin remodeling subcomplex GBAF that carries out key enzymatic activities, changing chromatin structure by altering DNA-histone contacts within a nucleosome in an ATP-dependent manner. May play a role in BRD4-mediated gene transcription. This chain is BRD4-interacting chromatin-remodeling complex-associated protein, found in Homo sapiens (Human).